The chain runs to 238 residues: CFA/I fimbrial subunit A (238 aa).

The first 19 residues, 1–19 (MHKLFYLLSLLMAPFVANA), serve as a signal peptide directing secretion.

It localises to the fimbrium. Its function is as follows. Might function as a shuttle protein in the transport of fimbria through the periplasmic space or might function as an adhesin. This is CFA/I fimbrial subunit A (cfaA) from Escherichia coli.